The primary structure comprises 363 residues: Transcription factor IIIA (363 aa).

C2H2-type zinc fingers lie at residues 38–62, 68–92, 98–123, 130–154, 160–184, 187–211, 215–237, 244–269, and 275–299; these read FICS…LCKH, FVCD…ILIH, FVCA…ERKH, YVCN…QCQH, FRCT…GKVH, YLCQ…REAH, VTCT…MKTH, YRCP…LSFH, and FVCE…SVVH. Residues 301 to 363 form a disordered region; the sequence is PDKKRMKLKV…LAPAALLTVH (63 aa). Residues 338-350 are compositionally biased toward low complexity; it reads SLPNSTESSSSPE.

The protein resides in the nucleus. Its function is as follows. Involved in ribosomal large subunit biogenesis. Binds the approximately 50 base pairs internal control region (ICR) of 5S ribosomal RNA genes. It is required for their RNA polymerase III-dependent transcription and may also maintain the transcription of other genes. Also binds the transcribed 5S RNA's. This chain is Transcription factor IIIA (Gtf3a), found in Rattus norvegicus (Rat).